Consider the following 195-residue polypeptide: MDITFNTGLMGSGKSKKLIDDYLIDPKEKVALSVSLTEDTFSRGKIESRDGRSLRSINLNRDQFKQNISLLEIIIFMTNTQTIYIDESQFLPKETVEKFVSLSESYHVPIHFYGLDLTFTGELFDSSSHLLTILPSENINRISRGCEASKCSKIAQYNARIVDGKVSRSGETFVEEKSYYLALCSDHYYNDEKII.

ATP is bound by residues 8 to 15 (GLMGSGKS) and 86 to 89 (DESQ). The active-site Proton acceptor is Glu-87. Residues Cys-146, Cys-151, Cys-184, and His-187 each coordinate Zn(2+).

This sequence belongs to the thymidine kinase family. Homotetramer.

Its subcellular location is the cytoplasm. It catalyses the reaction thymidine + ATP = dTMP + ADP + H(+). This is Thymidine kinase (tdk) from Bacillus subtilis subsp. natto.